The primary structure comprises 394 residues: Putative nickel insertion protein (394 aa).

It belongs to the LarC family.

This Syntrophotalea carbinolica (strain DSM 2380 / NBRC 103641 / GraBd1) (Pelobacter carbinolicus) protein is Putative nickel insertion protein.